Consider the following 117-residue polypeptide: Ig heavy chain V region 102 (117 aa).

Positions 1-19 (MGWSCIILFLVATATGVHS) are cleaved as a signal peptide. Residues 20 to 49 (HVQLQQPGAELVKPGASVKVSCKASGYTFT) are framework-1. A disulfide bridge connects residues C41 and C115. The interval 50 to 54 (SYWMH) is complementarity-determining-1. Residues 55 to 68 (WVKQRPGQGLEWIG) form a framework-2 region. Residues 69-85 (RIHPSDSDTNYNQKFKG) are complementarity-determining-2. The interval 86-117 (KATLTVDKSSSTAYMQLSSLTSEDSAVYYCAI) is framework-3.

This chain is Ig heavy chain V region 102, found in Mus musculus (Mouse).